Consider the following 778-residue polypeptide: Melanoma-associated antigen D1 (778 aa).

Disordered regions lie at residues 41 to 60 (PTNQ…PTAN), 78 to 123 (FKVQ…KGPN), and 182 to 333 (KAWN…PAWQ). The residue at position 92 (Tyr-92) is a Phosphotyrosine. Composition is skewed to polar residues over residues 104 to 118 (PNTQ…QNAT), 185 to 211 (NDTT…SQAD), 225 to 240 (TAQT…NLES), 253 to 263 (NNLNVEENSSG), and 300 to 319 (LAWQ…TPPA). Repeat copies occupy residues 296–301 (WQTPLA), 302–307 (WQNPSG), 308–313 (WQNQTA), 332–337 (WQNPVA), 338–343 (WQNPVI), 344–349 (WPNPVI), 350–355 (WQNPVI), 356–361 (WPNPIV), 362–367 (WPGPVV), 368–373 (WPNPLA), 374–379 (WQNPPG), 380–385 (WQTPPG), 386–391 (WQTPPG), 392–397 (WQGPPD), 398–403 (WQGPPD), 404–409 (WPLPPD), 410–415 (WPLPPD), 416–421 (WPLPTD), and 422–427 (WPLPPD). The segment at 296–444 (WQTPLAWQNP…IPPDWQNLRP (149 aa)) is 22 X 6 AA tandem repeats of W-[PQ]-X-P-X-X. The tract at residues 376 to 412 (NPPGWQTPPGWQTPPGWQGPPDWQGPPDWPLPPDWPL) is disordered. Low complexity predominate over residues 377-397 (PPGWQTPPGWQTPPGWQGPPD). Over residues 398-412 (WQGPPDWPLPPDWPL) the composition is skewed to pro residues. The stretch at 428–432 (WIPAD) is one 20; approximate repeat. 2 repeat units span residues 433-438 (WPIPPD) and 439-444 (WQNLRP). A compositionally biased stretch (low complexity) spans 440–455 (QNLRPSPNLRPSPNSR). The interval 440–466 (QNLRPSPNLRPSPNSRASQNPGAAQPR) is disordered. Residues 471-669 (LQERANKLVK…RDWTAQFMEA (199 aa)) form the MAGE domain.

Interacts with DLX5, DLX7 and MSX2 and forms homomultimers. Interacts with UNC5A. Interacts with TRIM28 and PJA1. Interacts with NGFR/p75NTR and RORA. As to expression, expressed in bone marrow stromal cells from both multiple myeloma patients and healthy donors. Seems to be ubiquitously expressed.

The protein localises to the cytoplasm. Its subcellular location is the cell membrane. It is found in the nucleus. In terms of biological role, involved in the apoptotic response after nerve growth factor (NGF) binding in neuronal cells. Inhibits cell cycle progression, and facilitates NGFR-mediated apoptosis. May act as a regulator of the function of DLX family members. May enhance ubiquitin ligase activity of RING-type zinc finger-containing E3 ubiquitin-protein ligases. Proposed to act through recruitment and/or stabilization of the Ubl-conjugating enzyme (E2) at the E3:substrate complex. Plays a role in the circadian rhythm regulation. May act as RORA co-regulator, modulating the expression of core clock genes such as BMAL1 and NFIL3, induced, or NR1D1, repressed. This is Melanoma-associated antigen D1 (MAGED1) from Homo sapiens (Human).